The following is a 184-amino-acid chain: Photosystem I assembly protein Ycf4 (184 aa).

Helical transmembrane passes span 22–42 and 57–77; these read FFWACILFLGSLGFLLVGTSS and IPFFPQGIVMSFYGIAGLFIS.

The protein belongs to the Ycf4 family.

The protein localises to the plastid. It localises to the chloroplast thylakoid membrane. Seems to be required for the assembly of the photosystem I complex. In Ceratophyllum demersum (Rigid hornwort), this protein is Photosystem I assembly protein Ycf4.